We begin with the raw amino-acid sequence, 309 residues long: Protein FdhE (309 aa).

It belongs to the FdhE family.

Its subcellular location is the cytoplasm. In terms of biological role, necessary for formate dehydrogenase activity. The sequence is that of Protein FdhE from Escherichia coli (strain SMS-3-5 / SECEC).